The sequence spans 229 residues: Octanoyltransferase (229 aa).

The 176-residue stretch at 45-220 (ATAVDELWVV…ELARQFCFVL (176 aa)) folds into the BPL/LPL catalytic domain. Substrate contacts are provided by residues 84–91 (RGGQVTYH), 151–153 (ALG), and 164–166 (GVA). The active-site Acyl-thioester intermediate is Cys182.

It belongs to the LipB family.

It is found in the cytoplasm. The enzyme catalyses octanoyl-[ACP] + L-lysyl-[protein] = N(6)-octanoyl-L-lysyl-[protein] + holo-[ACP] + H(+). It participates in protein modification; protein lipoylation via endogenous pathway; protein N(6)-(lipoyl)lysine from octanoyl-[acyl-carrier-protein]: step 1/2. In terms of biological role, catalyzes the transfer of endogenously produced octanoic acid from octanoyl-acyl-carrier-protein onto the lipoyl domains of lipoate-dependent enzymes. Lipoyl-ACP can also act as a substrate although octanoyl-ACP is likely to be the physiological substrate. In Xylella fastidiosa (strain 9a5c), this protein is Octanoyltransferase.